Consider the following 277-residue polypeptide: Large ribosomal subunit protein uL2 (277 aa).

Positions 222–277 (GVAMNPVDHPHGGGEGRTSGGRHPVTPWGKPTKGKKTRSNKATDKFIMRSRHQRKK) are disordered.

Belongs to the universal ribosomal protein uL2 family. As to quaternary structure, part of the 50S ribosomal subunit. Forms a bridge to the 30S subunit in the 70S ribosome.

Its function is as follows. One of the primary rRNA binding proteins. Required for association of the 30S and 50S subunits to form the 70S ribosome, for tRNA binding and peptide bond formation. It has been suggested to have peptidyltransferase activity; this is somewhat controversial. Makes several contacts with the 16S rRNA in the 70S ribosome. This chain is Large ribosomal subunit protein uL2, found in Brucella ovis (strain ATCC 25840 / 63/290 / NCTC 10512).